The following is a 122-amino-acid chain: Large ribosomal subunit protein uL14 (122 aa).

This sequence belongs to the universal ribosomal protein uL14 family. Part of the 50S ribosomal subunit. Forms a cluster with proteins L3 and L19. In the 70S ribosome, L14 and L19 interact and together make contacts with the 16S rRNA in bridges B5 and B8.

Functionally, binds to 23S rRNA. Forms part of two intersubunit bridges in the 70S ribosome. The protein is Large ribosomal subunit protein uL14 of Bacillus mycoides (strain KBAB4) (Bacillus weihenstephanensis).